Consider the following 168-residue polypeptide: Protein OPG162 (168 aa).

The Intravirion portion of the chain corresponds to Met-1–Lys-14. Residues Leu-15–His-37 form a helical membrane-spanning segment. Over Tyr-38–Lys-168 the chain is Virion surface. The C-type lectin domain occupies Tyr-54 to Val-163. Cystine bridges form between Cys-75–Cys-162 and Cys-141–Cys-154. Residue Asn-133 is glycosylated (N-linked (GlcNAc...) asparagine; by host).

The protein belongs to the orthopoxvirus OPG162 protein family. In terms of assembly, interacts with protein OPG161. Interacts with protein OPG164. Interacts with protein OPG190.

It is found in the virion membrane. Its subcellular location is the host Golgi apparatus. Its function is as follows. Forms a complex with OPG162 and OPG190 to coordinate the incorporation of OPG164 into wrapped enveloped virion (EV) membranes and, subsequently, the production of actin tails. Therefore plays an essential role in efficient cell-to-cell spread of viral particles. The protein is Protein OPG162 (OPG162) of Vaccinia virus (strain Western Reserve) (VACV).